Consider the following 1846-residue polypeptide: Peripheral-type benzodiazepine receptor-associated protein 1 (1846 aa).

Disordered regions lie at residues 57–97 (EESS…GYSC), 281–318 (NQRE…DDVE), and 560–628 (GPKD…SEVE). Over residues 576–587 (PKSSEPALTTLT) the composition is skewed to polar residues. Positions 599 to 612 (SLSNSSRSESIHNS) are enriched in low complexity. Residues 649–716 (ARIQVFLARY…PSNFVERVSD (68 aa)) enclose the SH3 1 domain. The tract at residues 726 to 785 (ELADSSHSSGPELSFLSGGGGGCSSGGQSSGGRSQPRPEEEAAGDELSLSPPPEGLGEPL) is disordered. Gly residues predominate over residues 742 to 755 (SGGGGGCSSGGQSS). Fibronectin type-III domains follow at residues 787–878 (VPYP…AGAG), 880–972 (VPSQ…TLPA), and 977–1075 (APLD…PALA). Disordered regions lie at residues 1084-1107 (SCLS…GLGD), 1163-1219 (EPTL…LDSG), 1243-1302 (HSRN…SDEE), 1322-1476 (SIPE…PESS), 1492-1617 (YDSE…QDLP), 1704-1755 (LTEA…AAQK), and 1812-1846 (VPSN…RVQC). Basic and acidic residues predominate over residues 1202-1219 (TQKKPSIEACHGGDLDSG). The segment covering 1251-1265 (DIQEEEEEEEEEEEE) has biased composition (acidic residues). The segment covering 1270 to 1283 (PCSSQKQVAGNSIR) has biased composition (polar residues). Residues 1324–1335 (PEEEEEEEEEEG) show a composition bias toward acidic residues. 2 stretches are compositionally biased toward basic and acidic residues: residues 1411 to 1420 (RPQDPREHCS) and 1545 to 1577 (AWEK…ESRG). Residues 1616–1684 (LPVRVFVALF…PCNMVAEVAV (69 aa)) enclose the SH3 2 domain. A compositionally biased stretch (polar residues) spans 1705-1719 (TEASGNGPSVYSSAH). The 68-residue stretch at 1755–1822 (KTSRPMVAAF…PSNFLEGPGP (68 aa)) folds into the SH3 3 domain. Over residues 1817 to 1830 (LEGPGPESGSLESG) the composition is skewed to low complexity.

It belongs to the RIMBP family. In terms of assembly, interacts with RIMS1 and RIMS2. Interacts with TSPO. Interacts with CACNA1A. In terms of tissue distribution, predominantly expressed in the brain.

The protein resides in the cytoplasm. It is found in the mitochondrion. In terms of biological role, required for synaptic transmission regulation. It probably controls the recruitement of voltage-gated calcium channels to the presynaptic membrane, and modulates neurotransmitter release. The polypeptide is Peripheral-type benzodiazepine receptor-associated protein 1 (Mus musculus (Mouse)).